A 107-amino-acid polypeptide reads, in one-letter code: UPF0060 membrane protein Sala_0701 (107 aa).

A run of 4 helical transmembrane segments spans residues 4–24 (FAYI…WAWL), 30–50 (VWWV…LTLV), 60–80 (AAYG…VEGA), and 87–107 (LIGA…PRGG).

The protein belongs to the UPF0060 family.

It is found in the cell inner membrane. This Sphingopyxis alaskensis (strain DSM 13593 / LMG 18877 / RB2256) (Sphingomonas alaskensis) protein is UPF0060 membrane protein Sala_0701.